The sequence spans 521 residues: DEAD-box ATP-dependent RNA helicase 12 (521 aa).

Positions 1–97 are disordered; the sequence is MHHPRARYPP…QQWLRRDQAT (97 aa). Over residues 13 to 50 the composition is skewed to gly residues; the sequence is TSGGGGGGGGGGGGGRGNGGGGFGGGGGGGGGNHGYYG. Over residues 51 to 89 the composition is skewed to low complexity; sequence RGPQPQPQQQHYHHQAQQLHQHQQQQQHAQRNSSSQQQQ. The Q motif motif lies at 147–175; the sequence is NEFEDYFLKRELLMGIYEKGFERPSPIQE. The Helicase ATP-binding domain maps to 178-348; sequence IPIALTGSDI…EKYLPRPYVI (171 aa). Residue 191-198 participates in ATP binding; that stretch reads AKNGTGKT. The short motif at 296-299 is the DEAD box element; sequence DEAD. The region spanning 358–518 is the Helicase C-terminal domain; sequence GITQYYAFVE…TIPPQIDLAV (161 aa).

This sequence belongs to the DEAD box helicase family. DDX6/DHH1 subfamily.

Its subcellular location is the cytoplasm. The protein localises to the P-body. The enzyme catalyses ATP + H2O = ADP + phosphate + H(+). Functionally, ATP-dependent RNA helicase involved in mRNA turnover, and more specifically in mRNA decapping. The polypeptide is DEAD-box ATP-dependent RNA helicase 12 (Oryza sativa subsp. japonica (Rice)).